Reading from the N-terminus, the 629-residue chain is Probable potassium transport system protein Kup 3 (629 aa).

Helical transmembrane passes span 20–40 (LSLS…LYTF), 54–74 (VTTI…IASV), 106–126 (PFII…GTIT), 143–163 (PSLK…LFAI), 171–191 (IGKA…ILGA), 212–232 (FLFS…LCAT), 253–273 (WFGL…ALVL), 291–311 (FLLP…QAII), 343–363 (IYIG…IIGF), 372–392 (AYGI…FIAL), 400–420 (IITS…FFAA), and 425–445 (FING…MMYI).

It belongs to the HAK/KUP transporter (TC 2.A.72) family.

The protein localises to the cell inner membrane. It catalyses the reaction K(+)(in) + H(+)(in) = K(+)(out) + H(+)(out). Transport of potassium into the cell. Likely operates as a K(+):H(+) symporter. The sequence is that of Probable potassium transport system protein Kup 3 from Legionella pneumophila (strain Paris).